The primary structure comprises 364 residues: Aminomethyltransferase (364 aa).

This sequence belongs to the GcvT family. In terms of assembly, the glycine cleavage system is composed of four proteins: P, T, L and H.

It catalyses the reaction N(6)-[(R)-S(8)-aminomethyldihydrolipoyl]-L-lysyl-[protein] + (6S)-5,6,7,8-tetrahydrofolate = N(6)-[(R)-dihydrolipoyl]-L-lysyl-[protein] + (6R)-5,10-methylene-5,6,7,8-tetrahydrofolate + NH4(+). Functionally, the glycine cleavage system catalyzes the degradation of glycine. The chain is Aminomethyltransferase from Klebsiella pneumoniae subsp. pneumoniae (strain ATCC 700721 / MGH 78578).